A 225-amino-acid chain; its full sequence is DNA-binding response regulator MtrA (225 aa).

The 114-residue stretch at 4–117 (RILVVDDDAS…ELVARVRARL (114 aa)) folds into the Response regulatory domain. At Asp53 the chain carries 4-aspartylphosphate. The ompR/PhoB-type DNA-binding region spans 125 to 224 (AEMLSIADVD…VRGVGYKAGP (100 aa)).

Post-translationally, phosphorylated by MtrB.

Functionally, member of the two-component regulatory system MtrA/MtrB. This chain is DNA-binding response regulator MtrA (mtrA), found in Mycobacterium leprae (strain TN).